The chain runs to 92 residues: Acylphosphatase (92 aa).

A disulfide bridge links cysteine 5 with cysteine 49. In terms of domain architecture, Acylphosphatase-like spans 5–92 (CIIAWIYGRV…SGELTDFRIR (88 aa)). Active-site residues include arginine 20 and asparagine 38.

The protein belongs to the acylphosphatase family.

The catalysed reaction is an acyl phosphate + H2O = a carboxylate + phosphate + H(+). This chain is Acylphosphatase, found in Escherichia coli O1:K1 / APEC.